The sequence spans 481 residues: Inosine-5'-monophosphate dehydrogenase (481 aa).

CBS domains lie at 92–148 (VIND…SKKV) and 152–209 (MTKM…PEAN). NAD(+)-binding positions include Asp244 and 293–295 (GIG). 2 residues coordinate K(+): Gly295 and Gly297. Ser298 provides a ligand contact to IMP. Cys300 provides a ligand contact to K(+). Cys300 (thioimidate intermediate) is an active-site residue. IMP is bound by residues 333–335 (DGG), 356–357 (GS), and 380–384 (YRGMG). Residue Arg396 is the Proton acceptor of the active site. Glu410 contributes to the IMP binding site. K(+) is bound by residues Glu464, Ser465, and His466.

It belongs to the IMPDH/GMPR family. Homotetramer. K(+) is required as a cofactor.

The catalysed reaction is IMP + NAD(+) + H2O = XMP + NADH + H(+). It participates in purine metabolism; XMP biosynthesis via de novo pathway; XMP from IMP: step 1/1. Its activity is regulated as follows. Mycophenolic acid (MPA) is a non-competitive inhibitor that prevents formation of the closed enzyme conformation by binding to the same site as the amobile flap. In contrast, mizoribine monophosphate (MZP) is a competitive inhibitor that induces the closed conformation. MPA is a potent inhibitor of mammalian IMPDHs but a poor inhibitor of the bacterial enzymes. MZP is a more potent inhibitor of bacterial IMPDH. Functionally, catalyzes the conversion of inosine 5'-phosphate (IMP) to xanthosine 5'-phosphate (XMP), the first committed and rate-limiting step in the de novo synthesis of guanine nucleotides, and therefore plays an important role in the regulation of cell growth. The protein is Inosine-5'-monophosphate dehydrogenase of Helicobacter pylori (strain ATCC 700392 / 26695) (Campylobacter pylori).